Reading from the N-terminus, the 95-residue chain is Putative membrane protein insertion efficiency factor (95 aa).

The protein belongs to the UPF0161 family.

Its subcellular location is the cell membrane. In terms of biological role, could be involved in insertion of integral membrane proteins into the membrane. The protein is Putative membrane protein insertion efficiency factor of Lactobacillus delbrueckii subsp. bulgaricus (strain ATCC 11842 / DSM 20081 / BCRC 10696 / JCM 1002 / NBRC 13953 / NCIMB 11778 / NCTC 12712 / WDCM 00102 / Lb 14).